The primary structure comprises 256 residues: Ubiquinone/menaquinone biosynthesis C-methyltransferase UbiE (256 aa).

Basic and acidic residues predominate over residues 1–12; the sequence is MNDQRKGDHAEP. The disordered stretch occupies residues 1–23; the sequence is MNDQRKGDHAEPTTHFGYQDVPE. Residues Thr-79, Asp-100, and 128–129 contribute to the S-adenosyl-L-methionine site; that span reads DA.

This sequence belongs to the class I-like SAM-binding methyltransferase superfamily. MenG/UbiE family.

It carries out the reaction a 2-demethylmenaquinol + S-adenosyl-L-methionine = a menaquinol + S-adenosyl-L-homocysteine + H(+). The catalysed reaction is a 2-methoxy-6-(all-trans-polyprenyl)benzene-1,4-diol + S-adenosyl-L-methionine = a 5-methoxy-2-methyl-3-(all-trans-polyprenyl)benzene-1,4-diol + S-adenosyl-L-homocysteine + H(+). It participates in quinol/quinone metabolism; menaquinone biosynthesis; menaquinol from 1,4-dihydroxy-2-naphthoate: step 2/2. The protein operates within cofactor biosynthesis; ubiquinone biosynthesis. In terms of biological role, methyltransferase required for the conversion of demethylmenaquinol (DMKH2) to menaquinol (MKH2) and the conversion of 2-polyprenyl-6-methoxy-1,4-benzoquinol (DDMQH2) to 2-polyprenyl-3-methyl-6-methoxy-1,4-benzoquinol (DMQH2). The sequence is that of Ubiquinone/menaquinone biosynthesis C-methyltransferase UbiE from Pseudomonas putida (strain ATCC 700007 / DSM 6899 / JCM 31910 / BCRC 17059 / LMG 24140 / F1).